Here is a 478-residue protein sequence, read N- to C-terminus: Chromosomal replication initiator protein DnaA (478 aa).

The segment at 1-82 is domain I, interacts with DnaA modulators; sequence MHTMNKTAES…ELGKNAKLLY (82 aa). The interval 82 to 140 is domain II; the sequence is YKIKMENTYGNKLPFTEQLPSAHRSPVRTQEIDVPVQQKNPELRNPFIIPGIRNLKIES. The segment at 141–358 is domain III, AAA+ region; it reads QLNANYSFDN…GAIISLIAQS (218 aa). Positions 186, 188, 189, and 190 each coordinate ATP. The domain IV, binds dsDNA stretch occupies residues 359–478; that stretch reads SFNKKEVTLE…VDDINKKLSL (120 aa).

This sequence belongs to the DnaA family. Oligomerizes as a right-handed, spiral filament on DNA at oriC.

It localises to the cytoplasm. Plays an essential role in the initiation and regulation of chromosomal replication. ATP-DnaA binds to the origin of replication (oriC) to initiate formation of the DNA replication initiation complex once per cell cycle. Binds the DnaA box (a 9 base pair repeat at the origin) and separates the double-stranded (ds)DNA. Forms a right-handed helical filament on oriC DNA; dsDNA binds to the exterior of the filament while single-stranded (ss)DNA is stabiized in the filament's interior. The ATP-DnaA-oriC complex binds and stabilizes one strand of the AT-rich DNA unwinding element (DUE), permitting loading of DNA polymerase. After initiation quickly degrades to an ADP-DnaA complex that is not apt for DNA replication. Binds acidic phospholipids. This Flavobacterium psychrophilum (strain ATCC 49511 / DSM 21280 / CIP 103535 / JIP02/86) protein is Chromosomal replication initiator protein DnaA.